A 541-amino-acid chain; its full sequence is Glucose-6-phosphate isomerase (541 aa).

The active-site Proton donor is Glu346. Active-site residues include His377 and Lys506.

This sequence belongs to the GPI family.

The protein localises to the cytoplasm. It catalyses the reaction alpha-D-glucose 6-phosphate = beta-D-fructose 6-phosphate. Its pathway is carbohydrate biosynthesis; gluconeogenesis. The protein operates within carbohydrate degradation; glycolysis; D-glyceraldehyde 3-phosphate and glycerone phosphate from D-glucose: step 2/4. In terms of biological role, catalyzes the reversible isomerization of glucose-6-phosphate to fructose-6-phosphate. This Sinorhizobium medicae (strain WSM419) (Ensifer medicae) protein is Glucose-6-phosphate isomerase.